The following is a 2058-amino-acid chain: MDTTISQQMDHFLESPLVTWVKTFGPCGNENESKLAMYMELVDGVFLNKIMVQIDPRPSNQRVNKHVNNDVNRRVQNLTILVRHIKAYYQEVLQQLIVMNLPNVLLISKDPLTDKSMEELKKILLLMLGCAVQCERKEEYIERIKQLDIETQAGIVSHIQEVTHNQENVFDLQWLELSDMAPEELDSLSRNMALHLKRLIDERDECKEVIVDLTQERDYLQFQNHPSPVKSSSPDTSANMVSHLSSEDKKHLAVELAESKAKLRRIRQELEEKSELLLDTKHEVERLNLELQKIKQENFQLASEARTARTYRDEIDSLKERASKVDRLENELARCKEKLHDVDFYKARMDELREDNMILIETKSMLEEQLAAARTRTDKLHELEKENLQLKSKIHDLELDRYSDKNRIEELLEENMVLEIAQKQSMNESAQLGWELDQLSKSTDLSDARKSFVFELNETTSSKILKLEKENQSLQNIIQDLREASLTLEEGNLKGQEWEKENQQLSKKIENLNQQIERERQSSLDLESLSEDLLKEKDQLSQALENIKSQKERQIKELEQENKHLIQTLEAVRQRSQVSTEARVKDIEMENRILHETIKDTSSKMNELEYEKKQLQKAFDQSKEQVEKLDKMEKEVHRLEKQNEILTKKVTSIKIVEEKMQGLEKENEVLEGENIVLKKSLDTLQNVTIKLEVLESENKQLDEENLELRRAVEAMRFSCAKSTQIERENNELQKEKEELQKNVELLKALGKKSERLEVSYQGLNDENWRLQQMLDTGNKKINDLEKELHDTEKENKDLQRTLEEMKICNKRLERMEEENKAKEQEMVQLEKDNKILQKESKRLWQQVELKDAILDDNTVKLADLEKENRALEKEISKLRDLSTKTRDLERENKDLLQQMTVDKRTLATLREDLVLEKLKTQQMSSELDKLSLELEKIGLNKESMLQDENSNAEKKYKLLENKIESTLKTTLAVKENKIVALEMKIEETSSLNQQLQNELNSIKKDIIASKENLRGAAHNSYTQLSSKQDCNSQINGQRETTVELLKFKDRTIELERNNAALQAEKKLFREQLQHLESHNLNLSSQMGTLQKQVTFLQEHNTALQTQTANLQVENATATSQVASLKSQISQFQNQLSARESENEILQQQKEHLRVTHESLLQDHEQLGSLYERQSAEYEGMISQHSSLKSQYKSLEQAHRSLEESYSTLIKHKKELEDLDAVLKKEQDVLQQERRKNFVAMEENQKLKTDLERLNFLHGELQTEYSSLHKHTKEVKTSLNNAQMELNRWQARFDELKEQHQTMDISLTKLDNHCELLTRLKSNLEEENHHLLSQIQMLSQQNQMLLEQSMETKEQYHEEQKQYIDKLHDLRRQKEKLEEKIMDQYKFYDPTPKKKSHWSGAKAIAKLIKPKKEPSRESVKSPTDVQSKTMDNAEMAASPSSMRPLRLQQESLDNSSLGSDEKGSPKVLASKVLVEVAQRQHRMSYHGSSSEQTDGPEHLSRSRRMESGSRAFSTSTIHLTAPAHNAKVPHLSRPKGYNSDDNQSDQLHEAESNAGSSRVPWTSSLEVSRSASNSSSPLTLKGRPESVSSEDMIPTKDIATLSRESNLYHPNAVMLGATKNRESPVNRNSLHLYDYPEKKNSSRTPTRPRPGSPGSEMVTLEEFLQESSRQSPPSRRHSLNDSELITLHQFLFEAETLHPSSQSPSPTLHLKDPSQTAVPKSLPSAENCEWRKRADRASRRAASLYIPRDMVTNRDDMLGDLFKKTEDPPDIRSPMSELIFKDAAQMPTSYVSPTVKVTGNTTKPGQYVKPHPRQLDAPLNVTSSLLHQANVYSATSSSQSPEPQALSPHGAMGSRGNSLSRAFSLASADLLKENGPEVVMQEKSDVETPVGKDFGRYMIRSSTPLGSQSSLREKPQSARMQHMLRGDDRQYRSLDSRRLSLALPKEETTPPQPAPSASSLQQHYTLGHGAIRGKPKLLSRSGEVALVSPVRPISSIPELETTQGLASAGPGKSRSTSPDCSPAPVCEEEPNKSETLKSTPASPDPSADPQTVWYEYGCV.

One can recognise a Calponin-homology (CH) domain in the interval 11 to 131 (HFLESPLVTW…KILLLMLGCA (121 aa)). Coiled-coil stretches lie at residues 195–221 (HLKR…DYLQ), 247–428 (EDKK…SMNE), 455–1016 (ELNE…LRGA), 1043–1082 (ELLK…NLNL), and 1108–1388 (ANLQ…KFYD). 7 disordered regions span residues 1406 to 1444 (LIKP…MRPL), 1480 to 1592 (HRMS…EDMI), 1617 to 1655 (TKNR…PGSE), 1696 to 1724 (LHPS…LPSA), 1831 to 1857 (YSAT…RGNS), 1940 to 1959 (LALP…ASSL), and 1988 to 2051 (PVRP…PQTV). The span at 1409-1418 (PKKEPSRESV) shows a compositional bias: basic and acidic residues. Residues 1419 to 1429 (KSPTDVQSKTM) show a composition bias toward polar residues. Positions 1494–1506 (GPEHLSRSRRMES) are enriched in basic and acidic residues. A compositionally biased stretch (polar residues) spans 1552–1577 (NAGSSRVPWTSSLEVSRSASNSSSPL). 2 short sequence motifs (GBA) span residues 1653-1675 (GSEM…PSRR) and 1676-1697 (HSLN…ETLH). A compositionally biased stretch (polar residues) spans 1831 to 1841 (YSATSSSQSPE). Low complexity predominate over residues 2039 to 2048 (PASPDPSADP). Residues 2055 to 2058 (YGCV) carry the PDZ-binding motif.

The protein belongs to the CCDC88 family. Interacts with dvl2/dsh via the PDZ-binding motif. As to expression, expressed weakly in gastrulae, with slightly stronger expression in the dorsal region. In neurulae, expressed in the neural plate with strong expression in the presumptive mesencephalic region. At the tailbud stage, expressed in somatic cells and in part of the tail. Also strongly expressed in regions of the head including eye vesicles, otic vesicles, olfactory placode and the pharyngeal cavity.

The protein resides in the cytoplasm. It localises to the cell junction. In terms of biological role, positive regulator of Wnt signaling, acting synergistically with dvl2/dsh. Functions upstream of ctnnb1/beta-catenin in the canonical Wnt pathway, and also activates jnk in the Wnt/planar cell polarity (PCP) pathway. Acts as a non-receptor guanine nucleotide exchange factor which binds to and activates guanine nucleotide-binding protein G(i) alpha subunits. This promotes apical cell constriction and subsequent bending of the neural plate during neurulation via arhgef18. This Xenopus laevis (African clawed frog) protein is Protein Daple (ccdc88c).